We begin with the raw amino-acid sequence, 230 residues long: Ureidoacrylate amidohydrolase RutB (230 aa).

Aspartate 24 functions as the Proton acceptor in the catalytic mechanism. Lysine 133 is a catalytic residue. The active-site Nucleophile is the cysteine 166.

This sequence belongs to the isochorismatase family. RutB subfamily.

The enzyme catalyses (Z)-3-ureidoacrylate + H2O + H(+) = (Z)-3-aminoacrylate + NH4(+) + CO2. It catalyses the reaction (Z)-3-ureidoacrylate + H2O = (Z)-3-aminoacrylate + carbamate + H(+). The catalysed reaction is (Z)-2-methylureidoacrylate + H2O + H(+) = (Z)-2-methylaminoacrylate + NH4(+) + CO2. Its function is as follows. Hydrolyzes ureidoacrylate to form aminoacrylate and carbamate. The carbamate hydrolyzes spontaneously, thereby releasing one of the nitrogen atoms of the pyrimidine ring as ammonia and one of its carbon atoms as CO2. This Escherichia coli O111:H- (strain 11128 / EHEC) protein is Ureidoacrylate amidohydrolase RutB.